The primary structure comprises 197 residues: Glycerol-3-phosphate acyltransferase (197 aa).

5 helical membrane passes run 6–26, 58–78, 82–102, 116–136, and 157–177; these read LFIV…AIIV, AITL…AHYL, MLNV…PIFF, ALLA…VFVA, and FYLI…CLWI.

It belongs to the PlsY family. Probably interacts with PlsX.

It is found in the cell inner membrane. It carries out the reaction an acyl phosphate + sn-glycerol 3-phosphate = a 1-acyl-sn-glycero-3-phosphate + phosphate. It participates in lipid metabolism; phospholipid metabolism. Its function is as follows. Catalyzes the transfer of an acyl group from acyl-phosphate (acyl-PO(4)) to glycerol-3-phosphate (G3P) to form lysophosphatidic acid (LPA). This enzyme utilizes acyl-phosphate as fatty acyl donor, but not acyl-CoA or acyl-ACP. The protein is Glycerol-3-phosphate acyltransferase of Ruthia magnifica subsp. Calyptogena magnifica.